Reading from the N-terminus, the 240-residue chain is Probable alpha-aspartyl dipeptidase (240 aa).

Residues serine 125, aspartate 140, and histidine 162 each act as charge relay system in the active site.

This sequence belongs to the peptidase S51 family.

It is found in the cytoplasm. The catalysed reaction is Dipeptidase E catalyzes the hydrolysis of dipeptides Asp-|-Xaa. It does not act on peptides with N-terminal Glu, Asn or Gln, nor does it cleave isoaspartyl peptides.. In terms of biological role, hydrolyzes dipeptides containing N-terminal aspartate residues. The chain is Probable alpha-aspartyl dipeptidase from Drosophila melanogaster (Fruit fly).